A 324-amino-acid chain; its full sequence is Homeobox protein engrailed-2 (324 aa).

Disordered stretches follow at residues 1–59, 89–174, and 215–240; these read MEEK…HQHP, GGAR…VLKA, and DRPSSGPRSRKPKKKNPNKEDKRPRT. Residues 89 to 110 are compositionally biased toward gly residues; sequence GGARGGEGGAGTTEGGGGGAGG. Residues 235–294 constitute a DNA-binding region (homeobox); that stretch reads DKRPRTAFTAEQLQRLKAEFQTNRYLTEQRRQSLAQELSLNESQIKIWFQNKRAKIKKAT.

The protein belongs to the engrailed homeobox family. Cerebellar granule cells.

Its subcellular location is the nucleus. This is Homeobox protein engrailed-2 (En2) from Mus musculus (Mouse).